Here is a 610-residue protein sequence, read N- to C-terminus: Modifier of mdg4 (610 aa).

Residues 1-160 (MADDEQFSLC…QQPRASARYK (160 aa)) form a self-association region. The segment at 1–308 (MADDEQFSLC…EEAEYIDLPM (308 aa)) is interaction with Chi. A BTB domain is found at 32–98 (VDVSLAAEGQ…MYCGEVNVKQ (67 aa)). Disordered stretches follow at residues 115–156 (GLTD…PRAS), 219–259 (VSTN…DSTT), 311–339 (PTKS…DDTY), and 386–432 (ESSF…PKPK). Over residues 122–135 (APQPPQESSPPPAA) the composition is skewed to pro residues. Over residues 136-156 (PHVQQQQIPAQRVQRQQPRAS) the composition is skewed to low complexity. Over residues 222-238 (NKRSAQRSSLTPASSSA) the composition is skewed to polar residues. A Phosphoserine modification is found at S230. Over residues 312-325 (TKSEPDYSEDHGDA) the composition is skewed to basic and acidic residues. Over residues 386-400 (ESSFVDTSGDQGNTE) the composition is skewed to polar residues. The span at 401-410 (AQAATSASAT) shows a compositional bias: low complexity. Residues 422–432 (TKVEDQTPKPK) are compositionally biased toward basic and acidic residues. An FLYWCH-type zinc finger spans residues 452–512 (YASTTKGGVK…VFPYEGEHVH (61 aa)). Residues 551 to 610 (LEEADDKEDEDFEEFEIQEIDEIELDEPEKTPAKEEEVDPNDFREKIKRRLQKALQNKKK) are interaction with su(Hw). Residues 567-577 (IQEIDEIELDE) show a composition bias toward acidic residues. Positions 567-595 (IQEIDEIELDEPEKTPAKEEEVDPNDFRE) are disordered. The segment covering 578–595 (PEKTPAKEEEVDPNDFRE) has biased composition (basic and acidic residues).

As to quaternary structure, can self-associate. Interacts with Chi. Interacts with Top2. Isoform mod2.2: Component of the gypsy chromatin insulator complex, composed of Cp190, mod(mdg4) and su(Hw). The gypsy chromatin insulator complex interacts with Topors via mod(mdg4) and su(Hw). Isoform mod2.2 interacts with Trl/GAGA and interaction with this protein may bypass the repressive effects of the su(Hw) insulator.

It localises to the nucleus. Its subcellular location is the chromosome. Functionally, component of the gypsy chromatin insulator complex which is required for the function of the gypsy chromatin insulator and other endogenous chromatin insulators. Chromatin insulators are regulatory elements which establish independent domains of transcriptional activity within eukaryotic genomes. Insulators have two defining properties; they can block the communication between an enhancer and a promoter when placed between them and can also buffer transgenes from position effect variegation (PEV). Insulators are proposed to structure the chromatin fiber into independent domains of differing transcriptional potential by promoting the formation of distinct chromatin loops. This chromatin looping may involve the formation of insulator bodies, where homotypic interactions between individual subunits of the insulator complex could promote the clustering of widely spaced insulators at the nuclear periphery. Within the gypsy insulator complex, this protein may control the nature of the repressive effect of su(Hw): in the absence of mod(mdg4) protein, su(Hw) exerts a bidirectional silencing effect, whereas in the presence of mod(mdg4), the silencing effect is unidirectional. Isoform H is specifically required to maintain the pairing of achiasmate homologs in male meiosis I which is mediated by the rDNA repeats on the achiasmate X-Y bivalents. Isoform H also plays a role in apoptotic regulatory pathways. This chain is Modifier of mdg4, found in Drosophila melanogaster (Fruit fly).